We begin with the raw amino-acid sequence, 187 residues long: MTKEPIYSPRMLHRDPDSPRPVLPTQLTSSTLRCSQFQTNVFCLRERDLLERFTSEVAQLQGRGESREFSFLLSHQLAEDLGKAFTEKAMLQTILDAEAKLPTGSVKDVLGLVRSMYALISLEEDPSLLRYGYLSQDNVGDVRREVSKLCGELRPHALALVTSFGIPDSFLSPIAFNWVEANTWSSV.

The interval 1–21 (MTKEPIYSPRMLHRDPDSPRP) is disordered.

The protein belongs to the acyl-CoA oxidase family.

It catalyses the reaction a 2,3-saturated acyl-CoA + O2 = a (2E)-enoyl-CoA + H2O2. The polypeptide is Putative acyl-coenzyme A oxidase At3g06690 (Arabidopsis thaliana (Mouse-ear cress)).